A 473-amino-acid polypeptide reads, in one-letter code: Nuclear distribution protein PAC1 (473 aa).

Residues 9–41 (QAEELHKSIIAYFLSAKLPKSAAALREEIADSV) form the LisH domain. Positions 60-87 (TSVVRLQKKIMDLEARNSALQSELDSAT) form a coiled coil. Residues 80–93 (QSELDSATPTSLSR) are compositionally biased toward polar residues. The segment at 80 to 99 (QSELDSATPTSLSRRNQDPV) is disordered. WD repeat units follow at residues 113 to 154 (SHRN…RTIK), 156 to 196 (HTRA…KNIR), 200 to 247 (GHDH…CVRT), 250 to 289 (GHVE…TKST), 292 to 352 (GHEH…IKTL), 354 to 393 (GHDN…KCVR), 397 to 434 (DAHA…ALSG), and 435 to 472 (VNGI…RVFA).

It belongs to the WD repeat LIS1/nudF family. Self-associates. Interacts with NDL1 and dynein.

Its subcellular location is the cytoplasm. It is found in the cytoskeleton. It localises to the spindle pole. In terms of biological role, positively regulates the activity of the minus-end directed microtubule motor protein dynein. May enhance dynein-mediated microtubule sliding by targeting dynein to the microtubule plus end. Required for nuclear migration during vegetative growth as well as development. Required for retrograde early endosome (EE) transport from the hyphal tip. Required for localization of dynein to the mitotic spindle poles. Recruits additional proteins to the dynein complex at SPBs. The chain is Nuclear distribution protein PAC1 from Ajellomyces dermatitidis (strain ER-3 / ATCC MYA-2586) (Blastomyces dermatitidis).